A 225-amino-acid chain; its full sequence is Ribonuclease 3 (225 aa).

An RNase III domain is found at methionine 7 to glycine 129. Glutamate 42 is a Mg(2+) binding site. Aspartate 46 is a catalytic residue. Residues aspartate 115 and glutamate 118 each contribute to the Mg(2+) site. Residue glutamate 118 is part of the active site. Positions aspartate 155–arginine 225 constitute a DRBM domain.

This sequence belongs to the ribonuclease III family. As to quaternary structure, homodimer. Mg(2+) is required as a cofactor.

The protein resides in the cytoplasm. It carries out the reaction Endonucleolytic cleavage to 5'-phosphomonoester.. In terms of biological role, digests double-stranded RNA. Involved in the processing of primary rRNA transcript to yield the immediate precursors to the large and small rRNAs (23S and 16S). Processes some mRNAs, and tRNAs when they are encoded in the rRNA operon. Processes pre-crRNA and tracrRNA of type II CRISPR loci if present in the organism. The chain is Ribonuclease 3 from Shewanella sediminis (strain HAW-EB3).